A 248-amino-acid polypeptide reads, in one-letter code: NSYFEQASGFYGHPHQATGMSMGTAGHHDQSATAAAAAYRGFPLSLGMTPYTNHHLQRSTQDSPYDASITAACNKIYGDGNAYKQDCLNIKSDTINGYKDIWNTTANGGGAGGGGGTGGGGGGSAGSANGANNTANGQNTSGGGGAGGGGGMPVRPSACTPDSRVGGYLDTSGGSPVSHRGGSAGVVGGAGTGVGQSGQSANVGGAGGVGGATAWNANCTISGAAAAQTASSLHQASNHTFYPWMAIA.

A compositionally biased stretch (gly residues) spans 116–125; it reads GTGGGGGGSA. The tract at residues 116–191 is disordered; it reads GTGGGGGGSA…GSAGVVGGAG (76 aa). Residues 126–139 are compositionally biased toward low complexity; sequence GSANGANNTANGQN. 2 stretches are compositionally biased toward gly residues: residues 140–152 and 182–191; these read TSGG…GGGM and GSAGVVGGAG. Residues 241–246 carry the Antp-type hexapeptide motif; it reads FYPWMA.

Belongs to the Antp homeobox family.

It is found in the nucleus. Functionally, sequence-specific transcription factor which is part of a developmental regulatory system that provides cells with specific positional identities on the anterior-posterior axis. Binds the consensus region 5'-TTAAT[GT][GA]-3'. This Musca domestica (House fly) protein is Homeotic protein ultrabithorax (Ubx).